Consider the following 402-residue polypeptide: tRNA(Met) cytidine acetate ligase (402 aa).

Residues Ile7–His20, Gly102, Asn171, and Arg196 each bind ATP.

The protein belongs to the TmcAL family.

Its subcellular location is the cytoplasm. It carries out the reaction cytidine(34) in elongator tRNA(Met) + acetate + ATP = N(4)-acetylcytidine(34) in elongator tRNA(Met) + AMP + diphosphate. Functionally, catalyzes the formation of N(4)-acetylcytidine (ac(4)C) at the wobble position of elongator tRNA(Met), using acetate and ATP as substrates. First activates an acetate ion to form acetyladenylate (Ac-AMP) and then transfers the acetyl group to tRNA to form ac(4)C34. This chain is tRNA(Met) cytidine acetate ligase, found in Clostridium acetobutylicum (strain ATCC 824 / DSM 792 / JCM 1419 / IAM 19013 / LMG 5710 / NBRC 13948 / NRRL B-527 / VKM B-1787 / 2291 / W).